We begin with the raw amino-acid sequence, 521 residues long: AAA ATPase forming ring-shaped complexes (521 aa).

Residues 4–44 are a coiled coil; it reads TEDLAALNDRLMAKNHALAEALSRAGKELTKAKSQLAQLAQ. 235–240 contributes to the ATP binding site; sequence GNGKTM.

Belongs to the AAA ATPase family. As to quaternary structure, homohexamer. Assembles into a hexameric ring structure.

This is AAA ATPase forming ring-shaped complexes from Bifidobacterium longum (strain DJO10A).